The following is a 247-amino-acid chain: 2,3-bisphosphoglycerate-dependent phosphoglycerate mutase (247 aa).

Substrate-binding positions include 8 to 15 (RHGESQWN), 21 to 22 (TG), R60, 87 to 90 (ERHY), K98, 114 to 115 (RR), and 183 to 184 (GN). H9 (tele-phosphohistidine intermediate) is an active-site residue. Residue E87 is the Proton donor/acceptor of the active site.

This sequence belongs to the phosphoglycerate mutase family. BPG-dependent PGAM subfamily.

It carries out the reaction (2R)-2-phosphoglycerate = (2R)-3-phosphoglycerate. The protein operates within carbohydrate degradation; glycolysis; pyruvate from D-glyceraldehyde 3-phosphate: step 3/5. Catalyzes the interconversion of 2-phosphoglycerate and 3-phosphoglycerate. This Chlorobium phaeobacteroides (strain BS1) protein is 2,3-bisphosphoglycerate-dependent phosphoglycerate mutase.